We begin with the raw amino-acid sequence, 107 residues long: UPF0145 protein PM1668 (107 aa).

It belongs to the UPF0145 family.

In Pasteurella multocida (strain Pm70), this protein is UPF0145 protein PM1668.